The primary structure comprises 126 residues: Holo-[acyl-carrier-protein] synthase (126 aa).

2 residues coordinate Mg(2+): Asp-8 and Glu-50.

Belongs to the P-Pant transferase superfamily. AcpS family. Mg(2+) serves as cofactor.

It is found in the cytoplasm. It carries out the reaction apo-[ACP] + CoA = holo-[ACP] + adenosine 3',5'-bisphosphate + H(+). Its function is as follows. Transfers the 4'-phosphopantetheine moiety from coenzyme A to a Ser of acyl-carrier-protein. This Micrococcus luteus (strain ATCC 4698 / DSM 20030 / JCM 1464 / CCM 169 / CCUG 5858 / IAM 1056 / NBRC 3333 / NCIMB 9278 / NCTC 2665 / VKM Ac-2230) (Micrococcus lysodeikticus) protein is Holo-[acyl-carrier-protein] synthase.